Reading from the N-terminus, the 316-residue chain is Beta-lactamase 3 (316 aa).

The N-terminal stretch at Met-1 to Gly-29 is a signal peptide. A lipid anchor (N-palmitoyl cysteine) is attached at Cys-30. A lipid anchor (S-diacylglycerol cysteine) is attached at Cys-30. The interval Asn-34–Asn-53 is disordered. The segment covering Asn-40–Lys-50 has biased composition (low complexity). Ser-95 acts as the Acyl-ester intermediate in catalysis. The Proton acceptor role is filled by Glu-191. A substrate-binding site is contributed by Lys-257–Gly-259.

It belongs to the class-A beta-lactamase family.

It is found in the cell membrane. The enzyme catalyses a beta-lactam + H2O = a substituted beta-amino acid. The sequence is that of Beta-lactamase 3 (blaZ) from Bacillus cereus.